Reading from the N-terminus, the 28-residue chain is Conotoxin Cl9b (28 aa).

2 positions are modified to 4-hydroxyproline: P17 and P28.

Post-translationally, contains 3 disulfide bonds. As to expression, expressed by the venom duct.

It is found in the secreted. In Californiconus californicus (California cone), this protein is Conotoxin Cl9b.